A 450-amino-acid polypeptide reads, in one-letter code: Glutamyl-tRNA(Gln) amidotransferase subunit A, mitochondrial (450 aa).

Active-site charge relay system residues include lysine 47 and serine 122. Serine 146 serves as the catalytic Acyl-ester intermediate.

It belongs to the amidase family. GatA subfamily. As to quaternary structure, subunit of the heterotrimeric GatFAB amidotransferase (AdT) complex, composed of A, B and F subunits.

Its subcellular location is the mitochondrion. The enzyme catalyses L-glutamyl-tRNA(Gln) + L-glutamine + ATP + H2O = L-glutaminyl-tRNA(Gln) + L-glutamate + ADP + phosphate + H(+). Allows the formation of correctly charged Gln-tRNA(Gln) through the transamidation of misacylated Glu-tRNA(Gln) in the mitochondria. The reaction takes place in the presence of glutamine and ATP through an activated gamma-phospho-Glu-tRNA(Gln). The polypeptide is Glutamyl-tRNA(Gln) amidotransferase subunit A, mitochondrial (Candida albicans (strain WO-1) (Yeast)).